The sequence spans 156 residues: Small ribosomal subunit protein uS7 (156 aa).

It belongs to the universal ribosomal protein uS7 family. Part of the 30S ribosomal subunit. Contacts proteins S9 and S11.

One of the primary rRNA binding proteins, it binds directly to 16S rRNA where it nucleates assembly of the head domain of the 30S subunit. Is located at the subunit interface close to the decoding center, probably blocks exit of the E-site tRNA. The polypeptide is Small ribosomal subunit protein uS7 (Anaeromyxobacter dehalogenans (strain 2CP-1 / ATCC BAA-258)).